A 134-amino-acid chain; its full sequence is Profilin (134 aa).

Belongs to the profilin family. Occurs in many kinds of cells as a complex with monomeric actin in a 1:1 ratio.

The protein localises to the cytoplasm. The protein resides in the cytoskeleton. In terms of biological role, binds to actin and affects the structure of the cytoskeleton. At high concentrations, profilin prevents the polymerization of actin, whereas it enhances it at low concentrations. By binding to PIP2, it inhibits the formation of IP3 and DG. The sequence is that of Profilin from Daucus carota (Wild carrot).